Reading from the N-terminus, the 359-residue chain is Cyclin puc1 (359 aa).

This sequence belongs to the cyclin family.

Function in exit from the mitotic cycle. Contributes to negative regulation of the timing of sexual development in fission yeast, and functions at the transition between cycling and non-cycling cells. Interacts with protein kinase A. This chain is Cyclin puc1 (puc1), found in Schizosaccharomyces pombe (strain 972 / ATCC 24843) (Fission yeast).